The primary structure comprises 124 residues: Protein MGF 110-4L (124 aa).

The N-terminal stretch at 1-28 is a signal peptide; the sequence is MLVIFLGILGLLANQVLGLPTQAGGHLR. The N-linked (GlcNAc...) asparagine; by host glycan is linked to Asn64. The short motif at 121–124 is the Prevents secretion from ER element; it reads KEDL.

It belongs to the asfivirus MGF 110 family.

The protein resides in the virion. The protein localises to the host endoplasmic reticulum-Golgi intermediate compartment. Its function is as follows. Causes the redistribution of lumenal ER protein to an enlarged ERGIC compartment. The protein is Protein MGF 110-4L of African swine fever virus (strain Badajoz 1971 Vero-adapted) (Ba71V).